A 240-amino-acid chain; its full sequence is Manganese transport system ATP-binding protein MntB (240 aa).

The ABC transporter domain maps to 1 to 233 (MNIQGLTIAY…KIQFAYGDAP (233 aa)). Residue 33–40 (GPNGAGKS) participates in ATP binding.

It belongs to the ABC transporter superfamily.

The protein resides in the cell membrane. Its function is as follows. This protein is probably a component of a manganese permease, a binding protein-dependent, ATP-driven transport system. Probably responsible for energy coupling to the transport system. This is Manganese transport system ATP-binding protein MntB (mntB) from Listeria innocua serovar 6a (strain ATCC BAA-680 / CLIP 11262).